We begin with the raw amino-acid sequence, 329 residues long: D-alanine--D-alanine ligase (329 aa).

The region spanning 120–326 (KLWYDALDIP…FHEFLEDCIN (207 aa)) is the ATP-grasp domain. 150–205 (AFEKWGKVFVKAARQGSSVGCYSVAEKQAIAKAVNDAFGYSDQVLVEKAVKPRELE) contacts ATP. Mg(2+) contacts are provided by aspartate 280, glutamate 293, and asparagine 295.

It belongs to the D-alanine--D-alanine ligase family. Mg(2+) is required as a cofactor. It depends on Mn(2+) as a cofactor.

The protein resides in the cytoplasm. It carries out the reaction 2 D-alanine + ATP = D-alanyl-D-alanine + ADP + phosphate + H(+). Its pathway is cell wall biogenesis; peptidoglycan biosynthesis. Functionally, cell wall formation. This is D-alanine--D-alanine ligase from Vibrio parahaemolyticus serotype O3:K6 (strain RIMD 2210633).